A 236-amino-acid chain; its full sequence is Ribose-5-phosphate isomerase A (236 aa).

Residues 32 to 35 (TGST), 87 to 90 (DGSD), and 100 to 103 (KGGG) each bind substrate. The Proton acceptor role is filled by E109. K127 lines the substrate pocket.

This sequence belongs to the ribose 5-phosphate isomerase family. As to quaternary structure, homodimer.

It carries out the reaction aldehydo-D-ribose 5-phosphate = D-ribulose 5-phosphate. It participates in carbohydrate degradation; pentose phosphate pathway; D-ribose 5-phosphate from D-ribulose 5-phosphate (non-oxidative stage): step 1/1. Catalyzes the reversible conversion of ribose-5-phosphate to ribulose 5-phosphate. The protein is Ribose-5-phosphate isomerase A of Haloquadratum walsbyi (strain DSM 16790 / HBSQ001).